A 109-amino-acid polypeptide reads, in one-letter code: Prefoldin subunit 1 (109 aa).

Ser2 is modified (N-acetylserine).

The protein belongs to the prefoldin subunit beta family. As to quaternary structure, heterohexamer of two PFD-alpha type and four PFD-beta type subunits.

Its subcellular location is the cytoplasm. Functionally, binds specifically to cytosolic chaperonin (c-CPN) and transfers target proteins to it. Binds to nascent polypeptide chain and promotes folding in an environment in which there are many competing pathways for nonnative proteins. The sequence is that of Prefoldin subunit 1 (PFD1) from Saccharomyces cerevisiae (strain ATCC 204508 / S288c) (Baker's yeast).